The chain runs to 523 residues: MPTVEELYRNYGILADATETAGQHKDAYQVILDGVKGGAKEKRLAAQFIPKFFKHFPELADSAINAQLDLCEDEDVSIRRQAIKELPQFATGDNLPRVADILTQLLQSDDSAEFNLVNNALLSIFKMDAKGTLGGLFSQILQGEDIVRERAIKFLSTKLKTLPEEVLTKEVEEFILAESKKVLEDVTGEEFVLFMKILSGLKSLQTVSGRQQLVELVAEQADLEQTFNPSDPDCVDRLLQCTRQAVPLFSKNVHSTKFVTYFCEHVLPNLSALTTPVEGLDIQLEVLKLLAEMSSFCGDMEKLESNLKKLFDKLLEYMPLPPEEAENGENAGGEEPKLQFSYVECLLYSFHQLGRKLPDFLTAKLNAEKLKDFKIRLQYFARGLQVYIRQLRLALQGKTGEALKTEENKIKVVALKITNNINVLIKDLFHIPPSYKSTVTLSWKPVQKADANQKRTSEDTTSSSPPKKASAGPKRDARQIYNPPSGKYSSNLGSFSYEQRGGFRGGRGRGWGGRGNRSRGRIY.

Positions Met-1–Phe-360 are ARM-like and Heat-like helical repeats. The disordered stretch occupies residues Val-446–Tyr-523. The Nuclear localization signal signature appears at Lys-454–Arg-475. Over residues Thr-460–Ala-471 the composition is skewed to low complexity. Residues Lys-487 to Tyr-497 show a composition bias toward polar residues. Residues Gly-502–Gly-515 are compositionally biased toward gly residues.

Belongs to the API5 family. In terms of assembly, monomer.

It localises to the nucleus. It is found in the cytoplasm. Its function is as follows. Antiapoptotic factor that may have a role in protein assembly. This is Apoptosis inhibitor 5 (API5) from Gallus gallus (Chicken).